Here is a 59-residue protein sequence, read N- to C-terminus: Cecropin-A (59 aa).

Residues 1 to 23 (MNFNKLFVIVLLAALAFFGQAEA) form the signal peptide. Position 57 is a leucine amide (leucine 57).

The protein belongs to the cecropin family.

The protein localises to the secreted. Functionally, cecropins have lytic and antibacterial activity against several Gram-positive and Gram-negative bacteria. The protein is Cecropin-A (CECA) of Culex pipiens pipiens (Northern house mosquito).